A 742-amino-acid polypeptide reads, in one-letter code: Zinc finger protein 700 (742 aa).

Residues 1–20 (MPCCSHRSCREDPGTSESRE) form a disordered region. Over residues 8–20 (SCREDPGTSESRE) the composition is skewed to basic and acidic residues. A KRAB domain is found at 24–104 (VAFEDVAVNF…KEDSHCGETF (81 aa)). C2H2-type zinc fingers lie at residues 194 to 216 (YACK…MVMH), 222 to 244 (YKCK…ERTH), 250 to 272 (YECK…ERTH), 278 to 300 (YECS…ERSH), 306 to 328 (YQCK…ERTH), 362 to 384 (YKCK…EKTH), 390 to 412 (YKCK…ERIH), 418 to 440 (YECK…GGTH), and 446 to 468 (YECK…GRTH). Residues 474–502 (YECKECGKAFRYVKHLQIHERTEKHIRMP) form a C2H2-type 10; degenerate zinc finger. 8 C2H2-type zinc fingers span residues 508 to 530 (YKCS…EKTH), 536 to 558 (YECN…ERTH), 564 to 586 (YECK…ERTH), 592 to 614 (YECK…GRTH), 620 to 642 (YECK…ERTH), 648 to 670 (YECK…ERKH), 676 to 698 (YECK…ARTH), and 704 to 726 (YECK…ARTH).

Belongs to the krueppel C2H2-type zinc-finger protein family.

The protein localises to the nucleus. Its function is as follows. May be involved in transcriptional regulation. This chain is Zinc finger protein 700 (ZNF700), found in Homo sapiens (Human).